The chain runs to 513 residues: Putative thymidine phosphorylase (513 aa).

The protein belongs to the thymidine/pyrimidine-nucleoside phosphorylase family. Type 2 subfamily.

The enzyme catalyses thymidine + phosphate = 2-deoxy-alpha-D-ribose 1-phosphate + thymine. The polypeptide is Putative thymidine phosphorylase (Rhodopseudomonas palustris (strain BisA53)).